Consider the following 374-residue polypeptide: Putative serine/threonine-protein kinase ZK507.3 (374 aa).

Residues 25–296 (WKVIVELGKG…CKLTLKEPLV (272 aa)) form the Protein kinase domain. Residues 31 to 39 (LGKGGYGTV) and lysine 60 contribute to the ATP site. The active-site Proton acceptor is aspartate 158. Residues 302 to 374 (NDNESGSTPT…KTRNKKPSRK (73 aa)) are disordered. The span at 306–324 (SGSTPTTSATACSPSSSTG) shows a compositional bias: low complexity. Positions 334-343 (IASNIDQKSI) are enriched in polar residues. Basic residues predominate over residues 364-374 (TKTRNKKPSRK).

It belongs to the protein kinase superfamily. Ser/Thr protein kinase family.

The catalysed reaction is L-seryl-[protein] + ATP = O-phospho-L-seryl-[protein] + ADP + H(+). It catalyses the reaction L-threonyl-[protein] + ATP = O-phospho-L-threonyl-[protein] + ADP + H(+). This chain is Putative serine/threonine-protein kinase ZK507.3, found in Caenorhabditis elegans.